Reading from the N-terminus, the 389-residue chain is Probable family 17 glucosidase SCW10 (389 aa).

Positions 1–18 (MRFSNFLTVSALLTGALG) are cleaved as a signal peptide. A propeptide spanning residues 19 to 29 (APAVRHKHEKR) is cleaved from the precursor. The interval 70–134 (ASQATTSTLE…SSASSSISAS (65 aa)) is disordered. Asparagine 279 is a glycosylation site (N-linked (GlcNAc...) asparagine). Glutamate 326 (nucleophile) is an active-site residue.

It belongs to the glycosyl hydrolase 17 family. In terms of processing, glycosylated.

It is found in the secreted. It localises to the cell wall. Functionally, glucanases possibly play a role in cell expansion during growth, in cell-cell fusion during mating, and in spore release during sporulation. This is Probable family 17 glucosidase SCW10 (SCW10) from Saccharomyces cerevisiae (strain ATCC 204508 / S288c) (Baker's yeast).